The following is a 50-amino-acid chain: Toxic protein HokE (50 aa).

A helical membrane pass occupies residues 5–25; the sequence is YALAAVIVLCLTVLGFTLLVG.

This sequence belongs to the Hok/Gef family.

Its subcellular location is the cell inner membrane. In terms of biological role, toxic component of a type I toxin-antitoxin (TA) system; if it expressed it could be neutralized by antisense antitoxin RNA SokE. The sequence is that of Toxic protein HokE from Escherichia coli (strain K12).